The chain runs to 313 residues: Putative S-adenosyl-L-methionine-dependent methyltransferase MAV_5150 (313 aa).

S-adenosyl-L-methionine contacts are provided by residues D139 and 168-169 (DL).

This sequence belongs to the UPF0677 family.

Functionally, exhibits S-adenosyl-L-methionine-dependent methyltransferase activity. This chain is Putative S-adenosyl-L-methionine-dependent methyltransferase MAV_5150, found in Mycobacterium avium (strain 104).